Consider the following 424-residue polypeptide: GTPase Obg (424 aa).

The Obg domain maps to 1 to 158; it reads MFYDQAKIYV…RNLLLELKLL (158 aa). Residues 159-329 form the OBG-type G domain; the sequence is ADVGLVGFPN…LVYAAAKALP (171 aa). Residues 165 to 172, 190 to 194, 212 to 215, 282 to 285, and 310 to 312 contribute to the GTP site; these read GFPNVGKS, FTTLV, DIPG, NKMD, and SAA. Positions 172 and 192 each coordinate Mg(2+). The OCT domain occupies 347–424; the sequence is TQASAPHRFE…IAGIEFEWEE (78 aa).

It belongs to the TRAFAC class OBG-HflX-like GTPase superfamily. OBG GTPase family. As to quaternary structure, monomer. Mg(2+) serves as cofactor.

It is found in the cytoplasm. Functionally, an essential GTPase which binds GTP, GDP and possibly (p)ppGpp with moderate affinity, with high nucleotide exchange rates and a fairly low GTP hydrolysis rate. Plays a role in control of the cell cycle, stress response, ribosome biogenesis and in those bacteria that undergo differentiation, in morphogenesis control. The chain is GTPase Obg from Desulfitobacterium hafniense (strain Y51).